The chain runs to 359 residues: MGGAVSAGEDNDELIDNLKEAQYIRTDLVEQAFRAIDRADYYLEEFKENAYKDLAWKHGNIHLSAPCIYSEVMEALDLQPGLSFLNLGSGTGYLSSMVGLILGPFGVNHGVELHSDVTEYAKQKLDVFIRTSDSFDKFDFCEPSFVTGNCLEIAPDCCQYDRVYCGAGVQKEHEEYMKNLLKVGGILVMPLEEKLTKITRTGPSAWETKKILAVSFAPLVQPCRSESGQSRLVQLPPPAVRSLQDLARLAIRGSIKRAMRQEATRGGGLKNTPMFKRRRVRRRRMETIVFLDKEVFASRISNPSDDTSCEDAEEDRREVAERTLQETKPEPPVNFLRQRVLRLPLPDPLKYYLLYYREK.

G2 carries N-myristoyl glycine lipidation. The active site involves S64. AdoMet binding motif stretches follow at residues 85–94 (LNLGSGTGYL), 160–164 (YDRVY), and 181–191 (LKVGGILVMPL). A BC-box region spans residues 240–250 (VRSLQDLARLA). The tract at residues 301 to 328 (SNPSDDTSCEDAEEDRREVAERTLQETK) is disordered. Basic and acidic residues predominate over residues 314 to 328 (EDRREVAERTLQETK). Positions 343–346 (LPLP) are CUL-box.

This sequence belongs to the methyltransferase superfamily. L-isoaspartyl/D-aspartyl protein methyltransferase family.

The protein localises to the cytoplasm. May act as a substrate recognition component of an ECS (Elongin BC-CUL5-SOCS-box protein) E3 ubiquitin ligase complex which mediates the ubiquitination and subsequent proteasomal degradation of target proteins. May bind to the methyltransferase cofactor S-adenosylmethionine (AdoMet) via the N-terminal AdoMet binding motif, but probably does not display methyltransferase activity. This chain is Protein-L-isoaspartate O-methyltransferase domain-containing protein 2 (Pcmtd2), found in Mus musculus (Mouse).